We begin with the raw amino-acid sequence, 156 residues long: Ribosomal RNA large subunit methyltransferase H (156 aa).

S-adenosyl-L-methionine-binding positions include Leu73, Gly104, and 123–128 (IGPLTL).

Belongs to the RNA methyltransferase RlmH family. In terms of assembly, homodimer.

Its subcellular location is the cytoplasm. It carries out the reaction pseudouridine(1915) in 23S rRNA + S-adenosyl-L-methionine = N(3)-methylpseudouridine(1915) in 23S rRNA + S-adenosyl-L-homocysteine + H(+). Functionally, specifically methylates the pseudouridine at position 1915 (m3Psi1915) in 23S rRNA. This is Ribosomal RNA large subunit methyltransferase H from Xanthomonas euvesicatoria pv. vesicatoria (strain 85-10) (Xanthomonas campestris pv. vesicatoria).